The sequence spans 556 residues: Formate--tetrahydrofolate ligase (556 aa).

65–72 (TPAGEGKS) provides a ligand contact to ATP.

This sequence belongs to the formate--tetrahydrofolate ligase family.

It catalyses the reaction (6S)-5,6,7,8-tetrahydrofolate + formate + ATP = (6R)-10-formyltetrahydrofolate + ADP + phosphate. Its pathway is one-carbon metabolism; tetrahydrofolate interconversion. The sequence is that of Formate--tetrahydrofolate ligase from Streptococcus thermophilus (strain ATCC BAA-250 / LMG 18311).